Reading from the N-terminus, the 315-residue chain is Methionyl-tRNA formyltransferase (315 aa).

113-116 contacts (6S)-5,6,7,8-tetrahydrofolate; sequence SLLP.

This sequence belongs to the Fmt family.

The enzyme catalyses L-methionyl-tRNA(fMet) + (6R)-10-formyltetrahydrofolate = N-formyl-L-methionyl-tRNA(fMet) + (6S)-5,6,7,8-tetrahydrofolate + H(+). Functionally, attaches a formyl group to the free amino group of methionyl-tRNA(fMet). The formyl group appears to play a dual role in the initiator identity of N-formylmethionyl-tRNA by promoting its recognition by IF2 and preventing the misappropriation of this tRNA by the elongation apparatus. The polypeptide is Methionyl-tRNA formyltransferase (Yersinia pseudotuberculosis serotype O:1b (strain IP 31758)).